We begin with the raw amino-acid sequence, 1032 residues long: Calmodulin-binding transcription activator 3 (1032 aa).

Positions 15–141 form a DNA-binding region, CG-1; sequence VGQILSEARH…YLEVKGSRVS (127 aa). The tract at residues 146–197 is disordered; the sequence is RMQRTEDAARSPQETGDALTSEHDGYASCSFNQNDHSNHSQTTDSASVNGFH. Polar residues predominate over residues 174 to 195; that stretch reads CSFNQNDHSNHSQTTDSASVNG. Phosphoserine is present on S272. ANK repeat units lie at residues 661-690, 694-723, and 733-762; these read GGQGVLHFAASLGYNWALEPTIIAGVSVDF, NGWTALHWAAFFGRERIIGSLIALGAAPGT, and SGSTPSDLAYANGHKGIAGYLSEYALRAHV. 2 consecutive IQ domains span residues 852 to 881 and 875 to 904; these read VQAAAIRIQNKFRGYKGRKDYLITRQRIIK and TRQRIIKIQAHVRGYQFRKNYRKIIWSVGV. A calmodulin-binding region spans residues 900–922; the sequence is WSVGVLEKVILRWRRKGAGLRGF. A coiled-coil region spans residues 945–987; that stretch reads KQGRKQTEDRLQKALARVKSMVQYPEARDQYRRLLNVVNDIQE. S964 carries the phosphoserine modification.

It belongs to the CAMTA family. Interacts with SR1IP1. Interacts with DSC1. In terms of processing, ubiquinated during pathogen infection. Ubiquitination leads to its subsequent proteasome-dependent degradation, thus allowing the establishment of plant defense response. As to expression, expressed in roots, stems, leaves, carpels, and siliques, but not in stigmas or other parts of the flower.

It is found in the nucleus. Its function is as follows. Transcription activator that binds to the DNA consensus sequence 5'-[ACG]CGCG[GTC]-3'. Binds calmodulin in a calcium-dependent manner in vitro. Regulates transcriptional activity in response to calcium signals. Involved in freezing tolerance in association with CAMTA1 and CAMTA2. Required for the cold-induced expression of DREB1B/CBF1, DREB1C/CBF2, ZAT12 and GOLS3. Involved in response to cold. Contributes together with CAMTA5 to the positive regulation of the cold-induced expression of DREB1A/CBF3, DREB1B/CBF1 and DREB1C/CBF2. Involved together with CAMTA2 and CAMTA4 in the positive regulation of a general stress response (GSR). Involved in the regulation of GSR amplitude downstream of MEKK1. Involved in the regulation of a set of genes involved in defense responses against pathogens. Involved in the regulation of both basal resistance and systemic acquired resistance (SAR). Acts as negative regulator of plant immunity. Binds to the promoter of the defense-related gene EDS1 and represses its expression. Binds to the promoter of the defense-related gene NDR1 and represses its expression. Involved in defense against insects. Required for tolerance to the generalist herbivore Trichoplusia ni, and contributes to the positive regulation of genes associated with glucosinolate metabolism. Required for tolerance to Bradysia impatiens larvae. Mediates herbivore-induced wound response. Required for wound-induced jasmonate accumulation. Involved in the regulation of ethylene-induced senescence by binding to the promoter of the senescence-inducer gene EIN3 and repressing its expression. The polypeptide is Calmodulin-binding transcription activator 3 (Arabidopsis thaliana (Mouse-ear cress)).